A 108-amino-acid polypeptide reads, in one-letter code: Protein FATTY ACID EXPORT 7 (108 aa).

Transmembrane regions (helical) follow at residues 32-52, 55-75, and 85-105; these read ISLV…TELP, PVLA…MMGS, and PAGL…HGLI.

Belongs to the TMEM14 family.

The protein localises to the membrane. Functionally, may be involved in free fatty acids export. The polypeptide is Protein FATTY ACID EXPORT 7 (Arabidopsis thaliana (Mouse-ear cress)).